A 217-amino-acid polypeptide reads, in one-letter code: Glutathione S-transferase B (217 aa).

The GST N-terminal domain maps to 1–87 (PMTLGYWNIR…YIARKHNLCG (87 aa)). Glutathione is bound by residues 6-7 (YW), 45-49 (WLNEK), 58-59 (NL), and 71-72 (QS). The 119-residue stretch at 89-207 (TEEETIRMDI…KSSRFLPKPL (119 aa)) folds into the GST C-terminal domain. Tyr115 contributes to the substrate binding site.

The protein belongs to the GST superfamily. Mu family. As to quaternary structure, homodimer.

The protein localises to the cytoplasm. It catalyses the reaction RX + glutathione = an S-substituted glutathione + a halide anion + H(+). The catalysed reaction is prostaglandin A2 + glutathione = prostaglandin A2-S-(R)-glutathione. It carries out the reaction prostaglandin J2 + glutathione = prostaglandin J2-S-(R)-glutathione. The enzyme catalyses prostaglandin J2 + glutathione = prostaglandin J2-S-(S)-glutathione. It catalyses the reaction prostaglandin A2 + glutathione = prostaglandin A2-S-(S)-glutathione. The catalysed reaction is 11(S)-hydroxy-14(S),15(S)-epoxy-(5Z,8Z,12E)-eicosatrienoate + glutathione = (11S,15S)-dihydroxy-14(R)-S-glutathionyl-(5Z,8Z,12E)-eicosatrienoate. Functionally, conjugation of reduced glutathione to a wide number of exogenous and endogenous hydrophobic electrophiles. Involved in the formation of glutathione conjugates of both prostaglandin A2 (PGA2) and prostaglandin J2 (PGJ2). Participates in the formation of novel hepoxilin regioisomers. The polypeptide is Glutathione S-transferase B (GSTM1) (Cavia porcellus (Guinea pig)).